A 141-amino-acid polypeptide reads, in one-letter code: Nucleoside diphosphate kinase (141 aa).

ATP is bound by residues Lys-11, Phe-59, Arg-87, Thr-93, Arg-104, and Asn-114. The active-site Pros-phosphohistidine intermediate is the His-117.

Belongs to the NDK family. Homotetramer. Requires Mg(2+) as cofactor.

The protein localises to the cytoplasm. The enzyme catalyses a 2'-deoxyribonucleoside 5'-diphosphate + ATP = a 2'-deoxyribonucleoside 5'-triphosphate + ADP. It catalyses the reaction a ribonucleoside 5'-diphosphate + ATP = a ribonucleoside 5'-triphosphate + ADP. Functionally, major role in the synthesis of nucleoside triphosphates other than ATP. The ATP gamma phosphate is transferred to the NDP beta phosphate via a ping-pong mechanism, using a phosphorylated active-site intermediate. The protein is Nucleoside diphosphate kinase of Xylella fastidiosa (strain 9a5c).